Reading from the N-terminus, the 334-residue chain is Petrobactin import system permease protein FatD (334 aa).

The next 9 helical transmembrane spans lie at 24 to 44 (FIIA…TGVY), 64 to 84 (TVAL…MQLI), 98 to 118 (IEWS…PTLV), 119 to 139 (QRMT…FLFL), 152 to 172 (IIGL…GLLF), 197 to 217 (LWLI…LTLA), 234 to 254 (IVLF…AVIG), 277 to 297 (SNLP…DIIS), and 304 to 324 (FELP…ITIL).

This sequence belongs to the binding-protein-dependent transport system permease family. FecCD subfamily. The complex is composed of two ATP-binding proteins (FatE), two transmembrane proteins (FatC and FatD) and a solute-binding protein (FpuA).

The protein localises to the cell membrane. Functionally, part of an ABC transporter complex involved in ferric-petrobactin uptake. Probably responsible for the translocation of the substrate across the membrane. The polypeptide is Petrobactin import system permease protein FatD (Bacillus anthracis).